The chain runs to 663 residues: MIDKRDDKPFKLKSKYKPSGDQPQAIESLVDNIEGGEKAQILLGATGTGKTYTMSQVISKVNKPTLVIAHNKTLAGQLYGEFKEFFPDNAVEYFVSYYDYYQPEAYVPSSDTYIEKDSSVNDEIDKLRHSATSSLLERNDVIVVASVSCIYGLGSPKEYADSAVSLRPGQEISRDTLLNQLVDIQFERNDIDFQRGCFRVRGDVVEVFPASRDEHAFRVEFFGDEIDRICEIESLTGKTIGEVDHLVLFPATHFVTNDEHMEQSIAKIQAELAEQLQLFESEGKLLEAQRLRQRTEYDIEMLREMGYTSGVENYSRHMDGRLPGEPPYTLLDFFPEDFLIMIDESHMTMGQIKGMYNGDQARKQMLVDYGFRLPSALDNRPLRREEFESHVHQIVYVSATPGEYEMSQTNTIIEQIIRPTGLLDPEIDVRPSMGQMDDLLGEINQRVARDERTFITTLTKKMAEDLTDYLKEMGVKVKYMHSDIKTLERTEIIRDLRLGVFDVLIGINLLREGIDVPEVSLVAILDADKEGFLRNERGLIQTIGRAARNVDGHVIMYADKMTDSMQRAIDETARRREIQIAYNKAHGIVPQTIKKDIRGLISISKTSHNDISKEEMDYESMSRGERKEAINALQKQMQEAAELLDFELAAQMRDLILELKLMD.

The segment covering 1–10 (MIDKRDDKPF) has biased composition (basic and acidic residues). The tract at residues 1–23 (MIDKRDDKPFKLKSKYKPSGDQP) is disordered. The region spanning 31–418 (DNIEGGEKAQ…TNTIIEQIIR (388 aa)) is the Helicase ATP-binding domain. 44-51 (GATGTGKT) lines the ATP pocket. The Beta-hairpin signature appears at 97-120 (YYDYYQPEAYVPSSDTYIEKDSSV). In terms of domain architecture, Helicase C-terminal spans 435–601 (QMDDLLGEIN…TIKKDIRGLI (167 aa)). Positions 627 to 662 (KEAINALQKQMQEAAELLDFELAAQMRDLILELKLM) constitute a UVR domain.

This sequence belongs to the UvrB family. Forms a heterotetramer with UvrA during the search for lesions. Interacts with UvrC in an incision complex.

It is found in the cytoplasm. In terms of biological role, the UvrABC repair system catalyzes the recognition and processing of DNA lesions. A damage recognition complex composed of 2 UvrA and 2 UvrB subunits scans DNA for abnormalities. Upon binding of the UvrA(2)B(2) complex to a putative damaged site, the DNA wraps around one UvrB monomer. DNA wrap is dependent on ATP binding by UvrB and probably causes local melting of the DNA helix, facilitating insertion of UvrB beta-hairpin between the DNA strands. Then UvrB probes one DNA strand for the presence of a lesion. If a lesion is found the UvrA subunits dissociate and the UvrB-DNA preincision complex is formed. This complex is subsequently bound by UvrC and the second UvrB is released. If no lesion is found, the DNA wraps around the other UvrB subunit that will check the other stand for damage. This Streptococcus pyogenes serotype M6 (strain ATCC BAA-946 / MGAS10394) protein is UvrABC system protein B.